The chain runs to 130 residues: Putative ankyrin repeat protein R886 (130 aa).

ANK repeat units lie at residues 21-50 (NYDR…DITA), 54-83 (YGFT…SIIK), and 85-113 (DNLT…DIRY).

This Acanthamoeba polyphaga (Amoeba) protein is Putative ankyrin repeat protein R886.